A 686-amino-acid polypeptide reads, in one-letter code: Thymidine kinase (686 aa).

Residues 1-14 (MASNSHNNYNTPRR) show a composition bias toward polar residues. Disordered stretches follow at residues 1–21 (MASN…DVPK) and 64–85 (NPGL…PSSD). Residue 243–250 (GCMAAGKT) participates in ATP binding. Catalysis depends on glutamate 270, which acts as the Proton acceptor. Residue glutamine 308 participates in substrate binding. Arginine 398 is a binding site for ATP. Arginine 404 provides a ligand contact to substrate.

This sequence belongs to the herpesviridae thymidine kinase family. As to quaternary structure, homodimer.

The catalysed reaction is thymidine + ATP = dTMP + ADP + H(+). Functionally, catalyzes the transfer of the gamma-phospho group of ATP to thymidine to generate dTMP in the salvage pathway of pyrimidine synthesis. The dTMP serves as a substrate for DNA polymerase during viral DNA replication. Allows the virus to be reactivated and to grow in non-proliferative cells lacking a high concentration of phosphorylated nucleic acid precursors. In Alcelaphine herpesvirus 1 (strain WC11) (AlHV-1), this protein is Thymidine kinase.